The primary structure comprises 508 residues: Steroid 17-alpha-hydroxylase/17,20 lyase (508 aa).

N202 contacts substrate. Residue C442 coordinates heme.

This sequence belongs to the cytochrome P450 family. Heme serves as cofactor.

Its subcellular location is the endoplasmic reticulum membrane. The protein resides in the microsome membrane. The enzyme catalyses a C21-steroid + reduced [NADPH--hemoprotein reductase] + O2 = a 17alpha-hydroxy-C21-steroid + oxidized [NADPH--hemoprotein reductase] + H2O + H(+). It carries out the reaction progesterone + reduced [NADPH--hemoprotein reductase] + O2 = 17alpha-hydroxyprogesterone + oxidized [NADPH--hemoprotein reductase] + H2O + H(+). The catalysed reaction is pregnenolone + reduced [NADPH--hemoprotein reductase] + O2 = 17alpha-hydroxypregnenolone + oxidized [NADPH--hemoprotein reductase] + H2O + H(+). It catalyses the reaction 17alpha-hydroxyprogesterone + reduced [NADPH--hemoprotein reductase] + O2 = androst-4-ene-3,17-dione + acetate + oxidized [NADPH--hemoprotein reductase] + H2O + 2 H(+). The enzyme catalyses 17alpha-hydroxyprogesterone + reduced [NADPH--hemoprotein reductase] + O2 = 16alpha,17alpha-dihydroxyprogesterone + oxidized [NADPH--hemoprotein reductase] + H2O + H(+). It carries out the reaction 16alpha,17alpha-dihydroxyprogesterone + reduced [NADPH--hemoprotein reductase] + O2 = 6beta,16alpha,17alpha-trihydroxyprogesterone + oxidized [NADPH--hemoprotein reductase] + H2O + H(+). The catalysed reaction is 17alpha-hydroxypregnenolone + reduced [NADPH--hemoprotein reductase] + O2 = 3beta-hydroxyandrost-5-en-17-one + acetate + oxidized [NADPH--hemoprotein reductase] + H2O + 2 H(+). It catalyses the reaction 16alpha,17alpha-dihydroxypregnenolone + reduced [NADPH--hemoprotein reductase] + O2 = 3beta,16alpha-dihydroxy-androst-5-en-17-one + acetate + oxidized [NADPH--hemoprotein reductase] + H2O + 2 H(+). The enzyme catalyses 3beta-hydroxyandrost-5-en-17-one + reduced [NADPH--hemoprotein reductase] + O2 = 3beta,16alpha-dihydroxy-androst-5-en-17-one + oxidized [NADPH--hemoprotein reductase] + H2O + H(+). It carries out the reaction androst-4-ene-3,17-dione + reduced [NADPH--hemoprotein reductase] + O2 = 16alpha-hydroxyandrost-4-ene-3,17-dione + oxidized [NADPH--hemoprotein reductase] + H2O + H(+). It functions in the pathway steroid hormone biosynthesis. Its pathway is steroid biosynthesis; glucocorticoid biosynthesis. With respect to regulation, regulated predominantly by intracellular cAMP levels. The 17,20-lyase activity is stimulated by cytochrome b5, which acts as an allosteric effector increasing the Vmax of the lyase activity. In terms of biological role, a cytochrome P450 monooxygenase involved in corticoid and androgen biosynthesis. Catalyzes 17-alpha hydroxylation of C21 steroids, which is common for both pathways. A second oxidative step, required only for androgen synthesis, involves an acyl-carbon cleavage. The 17-alpha hydroxy intermediates, as part of adrenal glucocorticoids biosynthesis pathway, are precursors of cortisol. Hydroxylates steroid hormones, pregnenolone and progesterone to form 17-alpha hydroxy metabolites, followed by the cleavage of the C17-C20 bond to form C19 steroids, dehydroepiandrosterone (DHEA) and androstenedione. Has 16-alpha hydroxylase activity. Catalyzes 16-alpha hydroxylation of 17-alpha hydroxy pregnenolone, followed by the cleavage of the C17-C20 bond to form 16-alpha-hydroxy DHEA. Also 16-alpha hydroxylates androgens, relevant for estriol synthesis. Mechanistically, uses molecular oxygen inserting one oxygen atom into a substrate, and reducing the second into a water molecule, with two electrons provided by NADPH via cytochrome P450 reductase (CPR; NADPH-ferrihemoprotein reductase). The polypeptide is Steroid 17-alpha-hydroxylase/17,20 lyase (CYP17A1) (Papio cynocephalus (Yellow baboon)).